We begin with the raw amino-acid sequence, 201 residues long: LexA repressor 1 (201 aa).

Positions 27–47 (LAEIAQAFGFASRNAAQKHVQ) form a DNA-binding region, H-T-H motif. Catalysis depends on for autocatalytic cleavage activity residues S122 and K159.

It belongs to the peptidase S24 family. Homodimer.

It catalyses the reaction Hydrolysis of Ala-|-Gly bond in repressor LexA.. Functionally, represses a number of genes involved in the response to DNA damage (SOS response), including recA and lexA. In the presence of single-stranded DNA, RecA interacts with LexA causing an autocatalytic cleavage which disrupts the DNA-binding part of LexA, leading to derepression of the SOS regulon and eventually DNA repair. The chain is LexA repressor 1 from Xanthomonas oryzae pv. oryzae (strain KACC10331 / KXO85).